The chain runs to 323 residues: Tetraacyldisaccharide 4'-kinase (323 aa).

56–63 is an ATP binding site; that stretch reads TVGGVGKT.

Belongs to the LpxK family.

The catalysed reaction is a lipid A disaccharide + ATP = a lipid IVA + ADP + H(+). Its pathway is glycolipid biosynthesis; lipid IV(A) biosynthesis; lipid IV(A) from (3R)-3-hydroxytetradecanoyl-[acyl-carrier-protein] and UDP-N-acetyl-alpha-D-glucosamine: step 6/6. Functionally, transfers the gamma-phosphate of ATP to the 4'-position of a tetraacyldisaccharide 1-phosphate intermediate (termed DS-1-P) to form tetraacyldisaccharide 1,4'-bis-phosphate (lipid IVA). This chain is Tetraacyldisaccharide 4'-kinase, found in Legionella pneumophila (strain Corby).